The chain runs to 805 residues: Polycystin-2-like protein 1 (805 aa).

A disordered region spans residues 1-59; that stretch reads MNAVGSPEGQELQKLGSGAWDNPAYSGPPSPHGTLRVCTISSTGPLQPQPKKPEDEPQE. Residues 1-103 lie on the Cytoplasmic side of the membrane; sequence MNAVGSPEGQ…ELYIKTTLRE (103 aa). The S-palmitoyl cysteine moiety is linked to residue cysteine 38. The helical transmembrane segment at 104–124 threads the bilayer; that stretch reads LLVYIVFLVDICLLTYGMTSS. Over 125 to 356 the chain is Extracellular; it reads SAYYYTKVMS…NWDFFIVGCE (232 aa). Residues asparagine 177 and asparagine 207 are each glycosylated (N-linked (GlcNAc...) asparagine). A disulfide bridge connects residues cysteine 210 and cysteine 223. Asparagine 241 carries N-linked (GlcNAc...) asparagine glycosylation. A helical transmembrane segment spans residues 357-376; that stretch reads VIFCVFIFYYVVEEILELHI. Ca(2+) is bound by residues glutamate 370 and glutamate 373. Residues 377-384 lie on the Cytoplasmic side of the membrane; that stretch reads HRLRYLSS. A helical membrane pass occupies residues 385 to 405; the sequence is IWNILDLVVILLSIVAVGFHI. Ca(2+) contacts are provided by asparagine 387 and aspartate 390. Over 406-433 the chain is Extracellular; the sequence is FRTLEVNRLMGKLLQQPNTYADFEFLAF. A helical transmembrane segment spans residues 434 to 454; sequence WQTQYNNMNAVNLFFAWIKIF. Topologically, residues 455–479 are cytoplasmic; the sequence is KYISFNKTMTQLSSTLARCAKDILG. A helical membrane pass occupies residues 480–499; the sequence is FAVMFFIVFFAYAQLGYLLF. Over 500–511 the chain is Extracellular; sequence GTQVENFSTFIK. Asparagine 505 carries an N-linked (GlcNAc...) asparagine glycan. The pore-forming intramembrane region spans 512–526; that stretch reads CIFTQFRIILGDFDY. Over 527–536 the chain is Extracellular; it reads NAIDNANRIL. The chain crosses the membrane as a helical span at residues 537–557; that stretch reads GPAYFVTYVFFVFFVLLNMFL. The Cytoplasmic segment spans residues 558 to 805; the sequence is AIINDTYSEV…RGEIPTLQRS (248 aa). Residues 633-668 enclose the EF-hand domain; sequence HEITELTATFTKFDRDGNRILDEKEQEKMRQDLEEE. 2 coiled-coil regions span residues 650 to 686 and 700 to 740; these read NRIL…IVSS and GWVS…MLER. A required for homooligomerization region spans residues 704 to 763; sequence GEEFYMLTRRVLQLETVLEGVVSQIDAVGSKLKMLERKGWLAPSPGVKEQAIWKHPQPAP. Residues 759-805 are disordered; the sequence is PQPAPAVTPDPWGVQGGQESEVPYKREEEALEERRLSRGEIPTLQRS. Over residues 780-796 the composition is skewed to basic and acidic residues; it reads VPYKREEEALEERRLSR.

The protein belongs to the polycystin family. Oligomer. Functional PKD2L1 homotetramer can be formed either through C-terminal trimerization followed by N-terminal dimerization of a fourth subunit with a subunit in the trimer or through dimerization followed by trimerization. Heterotetramer with either PKD1L1, PKD1L3 or PKD1; the heterotetrameric complex contains three PKD1L2 chains plus one chain from another family member. Interacts with PKD1L1, forming a ciliary calcium channel. Interacts with PKD1L3, forming a cation channel that is activated by low extracellular pH. Interacts with PKD1; this heteromeric functional cation channels is opened by hypo-osmotic stimulation. Interacts with RACK1; inhibits the channel activity possibly by impairing localization to the cell membrane. In terms of processing, palmitoylation is important for expression at the cell membrane and for channel activity. In terms of tissue distribution, detected in taste bud cells in fungiform papillae (at protein level). Ubiquitous. Expressed in adult heart, skeletal muscle, brain, spleen, testis, retina and liver. Isoform 4 appears to be expressed only in transformed lymphoblasts.

It is found in the cell projection. Its subcellular location is the cilium membrane. The protein localises to the cell membrane. The protein resides in the cytoplasmic vesicle. It carries out the reaction Ca(2+)(in) = Ca(2+)(out). The catalysed reaction is Na(+)(in) = Na(+)(out). The enzyme catalyses K(+)(in) = K(+)(out). It catalyses the reaction Mg(2+)(in) = Mg(2+)(out). With respect to regulation, the non-selective cation channel is gated following an off-response property by acid: gated open after the removal of acid stimulus, but not during acid application. Channel activity is inhibited by phosphatidylinositol-4,5-bisphosphate (PIP2). Non-selective cation channel activity is substantially increased when either the extracellular or intracellular calcium-ion concentration is raised. Regulation of non-selective cation channel activity by external calcium is bimodal, first sensitizing and subsequently inactivating the current. Homotetrameric, non-selective cation channel that is permeable to sodium, potassium, magnesium and calcium. Also forms functionnal heteromeric channels with PKD1, PKD1L1 and PKD1L3. Pore-forming subunit of a heterotetrameric, non-selective cation channel, formed by PKD1L2 and PKD1L3, that is permeable to sodium, potassium, magnesium and calcium and which may act as a sour taste receptor in gustatory cells; however, its contribution to sour taste perception is unclear in vivo and may be indirect. The homomeric and heteromeric channels formed by PKD1L2 and PKD1L3 are activated by low pH and Ca(2+), but opens only when the extracellular pH rises again and after the removal of acid stimulus. Pore-forming subunit of a calcium-permeant ion channel formed by PKD1L2 and PKD1L1 in primary cilia, where it controls cilium calcium concentration, without affecting cytoplasmic calcium concentration, and regulates sonic hedgehog/SHH signaling and GLI2 transcription. The PKD1L1:PKD2L1 complex channel is mechanosensitive only at high pressures and is highly temperature sensitive. Pore-forming subunit of a calcium-permeant ion channel formed by PKD1L2 and PKD1 that produces a transient increase in intracellular calcium concentration upon hypo-osmotic stimulation (200 mOsm). May play a role in the perception of carbonation taste. May play a role in the sensory perception of water, via a mechanism that activates the channel in response to dilution of salivary bicarbonate and changes in salivary pH. The chain is Polycystin-2-like protein 1 from Homo sapiens (Human).